A 481-amino-acid chain; its full sequence is Glutamyl-tRNA(Gln) amidotransferase subunit A (481 aa).

Active-site charge relay system residues include lysine 76 and serine 151. Serine 175 functions as the Acyl-ester intermediate in the catalytic mechanism.

Belongs to the amidase family. GatA subfamily. As to quaternary structure, heterotrimer of A, B and C subunits.

The enzyme catalyses L-glutamyl-tRNA(Gln) + L-glutamine + ATP + H2O = L-glutaminyl-tRNA(Gln) + L-glutamate + ADP + phosphate + H(+). In terms of biological role, allows the formation of correctly charged Gln-tRNA(Gln) through the transamidation of misacylated Glu-tRNA(Gln) in organisms which lack glutaminyl-tRNA synthetase. The reaction takes place in the presence of glutamine and ATP through an activated gamma-phospho-Glu-tRNA(Gln). The protein is Glutamyl-tRNA(Gln) amidotransferase subunit A of Neisseria gonorrhoeae (strain ATCC 700825 / FA 1090).